The chain runs to 180 residues: Dynactin subunit 6 (180 aa).

It belongs to the dynactin subunits 5/6 family. Dynactin subunit 6 subfamily. In terms of assembly, subunit of dynactin, a multiprotein complex part of a tripartite complex with dynein and a adapter, such as BICDL1, BICD2 or HOOK3. The dynactin complex is built around ACTR1A/ACTB filament and consists of an actin-related filament composed of a shoulder domain, a pointed end and a barbed end.

The protein localises to the cytoplasm. The protein resides in the cytoskeleton. Part of the dynactin complex that activates the molecular motor dynein for ultra-processive transport along microtubules. This is Dynactin subunit 6 (dnc-6) from Caenorhabditis elegans.